Here is a 62-residue protein sequence, read N- to C-terminus: DNA-directed RNA polymerase subunit Rpo10 (62 aa).

Zn(2+) is bound by residues Cys-6, Cys-9, Cys-43, and Cys-44.

This sequence belongs to the archaeal Rpo10/eukaryotic RPB10 RNA polymerase subunit family. As to quaternary structure, part of the RNA polymerase complex. The cofactor is Zn(2+).

Its subcellular location is the cytoplasm. It catalyses the reaction RNA(n) + a ribonucleoside 5'-triphosphate = RNA(n+1) + diphosphate. Its function is as follows. DNA-dependent RNA polymerase (RNAP) catalyzes the transcription of DNA into RNA using the four ribonucleoside triphosphates as substrates. This is DNA-directed RNA polymerase subunit Rpo10 from Methanocorpusculum labreanum (strain ATCC 43576 / DSM 4855 / Z).